A 245-amino-acid polypeptide reads, in one-letter code: 1-(5-phosphoribosyl)-5-[(5-phosphoribosylamino)methylideneamino] imidazole-4-carboxamide isomerase (245 aa).

The active-site Proton acceptor is D8. The active-site Proton donor is the D130.

The protein belongs to the HisA/HisF family.

Its subcellular location is the cytoplasm. The enzyme catalyses 1-(5-phospho-beta-D-ribosyl)-5-[(5-phospho-beta-D-ribosylamino)methylideneamino]imidazole-4-carboxamide = 5-[(5-phospho-1-deoxy-D-ribulos-1-ylimino)methylamino]-1-(5-phospho-beta-D-ribosyl)imidazole-4-carboxamide. The protein operates within amino-acid biosynthesis; L-histidine biosynthesis; L-histidine from 5-phospho-alpha-D-ribose 1-diphosphate: step 4/9. This Pseudomonas fluorescens (strain Pf0-1) protein is 1-(5-phosphoribosyl)-5-[(5-phosphoribosylamino)methylideneamino] imidazole-4-carboxamide isomerase.